A 192-amino-acid polypeptide reads, in one-letter code: UPF0312 protein PSPTO_5071 (192 aa).

A signal peptide spans 1-23 (MLKKSLAALALGTALLSAGQAMA).

The protein belongs to the UPF0312 family. Type 1 subfamily.

Its subcellular location is the periplasm. The polypeptide is UPF0312 protein PSPTO_5071 (Pseudomonas syringae pv. tomato (strain ATCC BAA-871 / DC3000)).